The primary structure comprises 144 residues: Large ribosomal subunit protein uL13 (144 aa).

It belongs to the universal ribosomal protein uL13 family. Part of the 50S ribosomal subunit.

Its function is as follows. This protein is one of the early assembly proteins of the 50S ribosomal subunit, although it is not seen to bind rRNA by itself. It is important during the early stages of 50S assembly. This chain is Large ribosomal subunit protein uL13, found in Mycoplasmopsis pulmonis (strain UAB CTIP) (Mycoplasma pulmonis).